The primary structure comprises 936 residues: Bifunctional uridylyltransferase/uridylyl-removing enzyme (936 aa).

The uridylyltransferase stretch occupies residues 1 to 372 (MTIPRIRQPR…SIATLLMRKR (372 aa)). Positions 373 to 727 (NLGDFVLDGG…VLPDPERAVS (355 aa)) are uridylyl-removing. In terms of domain architecture, HD spans 488-610 (TDEHTIRAIG…VQSVERLHLL (123 aa)). ACT domains are found at residues 728–809 (EVLV…KALR) and 840–915 (VIEI…TVPR). The span at 915–930 (RKVEEGAEQGAEKADA) shows a compositional bias: basic and acidic residues. The disordered stretch occupies residues 915–936 (RKVEEGAEQGAEKADAGEIVAA).

Belongs to the GlnD family. Mg(2+) serves as cofactor.

The catalysed reaction is [protein-PII]-L-tyrosine + UTP = [protein-PII]-uridylyl-L-tyrosine + diphosphate. The enzyme catalyses [protein-PII]-uridylyl-L-tyrosine + H2O = [protein-PII]-L-tyrosine + UMP + H(+). With respect to regulation, uridylyltransferase (UTase) activity is inhibited by glutamine, while glutamine activates uridylyl-removing (UR) activity. Its function is as follows. Modifies, by uridylylation and deuridylylation, the PII regulatory proteins (GlnB and homologs), in response to the nitrogen status of the cell that GlnD senses through the glutamine level. Under low glutamine levels, catalyzes the conversion of the PII proteins and UTP to PII-UMP and PPi, while under higher glutamine levels, GlnD hydrolyzes PII-UMP to PII and UMP (deuridylylation). Thus, controls uridylylation state and activity of the PII proteins, and plays an important role in the regulation of nitrogen fixation and metabolism. The protein is Bifunctional uridylyltransferase/uridylyl-removing enzyme of Rhodospirillum rubrum (strain ATCC 11170 / ATH 1.1.1 / DSM 467 / LMG 4362 / NCIMB 8255 / S1).